The chain runs to 121 residues: MARIAGVDIPRDKRVVISLTYIYGIGKSTAKKILAEAGVSEDTRVRDLTEEELGRIREIVGRLKVEGDLRREVSLNIKRLIEIGCYRGIRHRRGLPVRGQNTKNNARTRKGPRRTVANKKK.

A disordered region spans residues 94–121; it reads GLPVRGQNTKNNARTRKGPRRTVANKKK. Positions 106–121 are enriched in basic residues; it reads ARTRKGPRRTVANKKK.

The protein belongs to the universal ribosomal protein uS13 family. In terms of assembly, part of the 30S ribosomal subunit. Forms a loose heterodimer with protein S19. Forms two bridges to the 50S subunit in the 70S ribosome.

Its function is as follows. Located at the top of the head of the 30S subunit, it contacts several helices of the 16S rRNA. In the 70S ribosome it contacts the 23S rRNA (bridge B1a) and protein L5 of the 50S subunit (bridge B1b), connecting the 2 subunits; these bridges are implicated in subunit movement. Contacts the tRNAs in the A and P-sites. The polypeptide is Small ribosomal subunit protein uS13 (Geobacillus sp. (strain WCH70)).